A 438-amino-acid chain; its full sequence is Zinc finger protein 641 (438 aa).

The interval 1-53 (MQAEDRSQFGSAAEMLSEQTAALGTGWESMNVQLDGAEPQVERGSQEERPWRT) is disordered. The segment covering 17–32 (SEQTAALGTGWESMNV) has biased composition (polar residues). Positions 40 to 51 (QVERGSQEERPW) are enriched in basic and acidic residues. Positions 109–181 (VTIKDVSLCF…DPQDLEERDI (73 aa)) constitute a KRAB domain. The segment at 171–265 (PDPQDLEERD…EMDSLLRPHT (95 aa)) is transactivation. Ser191 bears the Phosphoserine mark. 3 consecutive C2H2-type zinc fingers follow at residues 264–286 (HTCPQCGKQFVWGSHLARHQQTH), 292–314 (YSCLKCEKTFGRRHHLIRHQKTH), and 320–342 (SRCSECGKNFRCNSHLASHQRVH). A disordered region spans residues 345–367 (GKSCKGQEVGESPGTRKRQRAPP). 2 C2H2-type zinc fingers span residues 372–394 (HVCTECGKSFGRRHHLVRHWLTH) and 400–422 (FQCPRCEKSFGRKHHLDRHLLTH). Positions 418 to 438 (HLLTHQGQSPRNSWDRGTSVF) are disordered. Residues 422–438 (HQGQSPRNSWDRGTSVF) are compositionally biased toward polar residues. Residue Ser426 is modified to Phosphoserine.

Belongs to the krueppel C2H2-type zinc-finger protein family. Highly expressed in skeletal muscle, moderate expression in heart, liver, and pancreas, lower expression in placenta, no expression seen in brain, lung, and kidney.

It is found in the nucleus. Its function is as follows. Transcriptional activator. Activates transcriptional activities of SRE and AP-1. This is Zinc finger protein 641 (ZNF641) from Homo sapiens (Human).